The primary structure comprises 267 residues: 3-methyl-2-oxobutanoate hydroxymethyltransferase (267 aa).

Mg(2+) is bound by residues aspartate 46 and aspartate 85. 3-methyl-2-oxobutanoate-binding positions include 46–47 (DS), aspartate 85, and lysine 115. Position 117 (glutamate 117) interacts with Mg(2+). Residue glutamate 184 is the Proton acceptor of the active site.

This sequence belongs to the PanB family. Homodecamer; pentamer of dimers. Mg(2+) serves as cofactor.

It localises to the cytoplasm. The enzyme catalyses 3-methyl-2-oxobutanoate + (6R)-5,10-methylene-5,6,7,8-tetrahydrofolate + H2O = 2-dehydropantoate + (6S)-5,6,7,8-tetrahydrofolate. It functions in the pathway cofactor biosynthesis; (R)-pantothenate biosynthesis; (R)-pantoate from 3-methyl-2-oxobutanoate: step 1/2. Catalyzes the reversible reaction in which hydroxymethyl group from 5,10-methylenetetrahydrofolate is transferred onto alpha-ketoisovalerate to form ketopantoate. This Geotalea daltonii (strain DSM 22248 / JCM 15807 / FRC-32) (Geobacter daltonii) protein is 3-methyl-2-oxobutanoate hydroxymethyltransferase.